Reading from the N-terminus, the 337-residue chain is Major outer membrane protein P.IB (337 aa).

The signal sequence occupies residues 1-19 (MKKSLIALTLAALPVAAMA).

Belongs to the Gram-negative porin family. In terms of assembly, homotrimer.

Its subcellular location is the cell outer membrane. Serves as a slightly cation selective porin. The polypeptide is Major outer membrane protein P.IB (por) (Neisseria lactamica).